Reading from the N-terminus, the 299-residue chain is Oxygen-dependent coproporphyrinogen-III oxidase (299 aa).

Residue Ser92 coordinates substrate. Residues His96 and His106 each contribute to the a divalent metal cation site. His106 acts as the Proton donor in catalysis. Residue Asn108–Arg110 coordinates substrate. The a divalent metal cation site is built by His145 and His175. The tract at residues Tyr240–Glu275 is important for dimerization. Substrate is bound at residue Gly258–Arg260.

The protein belongs to the aerobic coproporphyrinogen-III oxidase family. Homodimer. It depends on a divalent metal cation as a cofactor.

It is found in the cytoplasm. It catalyses the reaction coproporphyrinogen III + O2 + 2 H(+) = protoporphyrinogen IX + 2 CO2 + 2 H2O. Its pathway is porphyrin-containing compound metabolism; protoporphyrin-IX biosynthesis; protoporphyrinogen-IX from coproporphyrinogen-III (O2 route): step 1/1. Involved in the heme biosynthesis. Catalyzes the aerobic oxidative decarboxylation of propionate groups of rings A and B of coproporphyrinogen-III to yield the vinyl groups in protoporphyrinogen-IX. This Citrobacter koseri (strain ATCC BAA-895 / CDC 4225-83 / SGSC4696) protein is Oxygen-dependent coproporphyrinogen-III oxidase.